The chain runs to 498 residues: Glutamyl-tRNA(Gln) amidotransferase subunit A (498 aa).

Catalysis depends on charge relay system residues Lys-80 and Ser-155. Positions 132-159 (SSTENSAYGPTRNPWDTDRVPGGSSGGS) are disordered. The active-site Acyl-ester intermediate is Ser-179.

The protein belongs to the amidase family. GatA subfamily. In terms of assembly, heterotrimer of A, B and C subunits.

The enzyme catalyses L-glutamyl-tRNA(Gln) + L-glutamine + ATP + H2O = L-glutaminyl-tRNA(Gln) + L-glutamate + ADP + phosphate + H(+). Its function is as follows. Allows the formation of correctly charged Gln-tRNA(Gln) through the transamidation of misacylated Glu-tRNA(Gln) in organisms which lack glutaminyl-tRNA synthetase. The reaction takes place in the presence of glutamine and ATP through an activated gamma-phospho-Glu-tRNA(Gln). This is Glutamyl-tRNA(Gln) amidotransferase subunit A from Thermobifida fusca (strain YX).